Consider the following 335-residue polypeptide: NAC domain-containing protein 60 (335 aa).

Residues 14–156 form the NAC domain; it reads TFPGFKFSPT…ALVICRLRRN (143 aa). A DNA-binding region spans residues 112–162; sequence IGTKRTLVFHIGRAPKGGRTEWLMHEYCMIGVSLDALVICRLRRNTEFQGS. A helical membrane pass occupies residues 315–335; that stretch reads ARWDVVVWLLVMIAVLVFYLV.

In terms of tissue distribution, expressed in roots, rosette leaves, cauline leaves, shoot apex, stems and flowers.

The protein resides in the membrane. The protein localises to the nucleus. Its function is as follows. Transcriptional activator activated by proteolytic cleavage through regulated intramembrane proteolysis (RIP). Transcription factor involved in modulation of abscisic acid (ABA) signaling. Attenuates ABA sensitivity and glucose-induced ABA accumulation. Reduces the expression of ABI4 gene. This chain is NAC domain-containing protein 60, found in Arabidopsis thaliana (Mouse-ear cress).